Here is a 296-residue protein sequence, read N- to C-terminus: GTPase Era (296 aa).

The Era-type G domain maps to 7-173; the sequence is KAGFVSIIGR…VDLVREHLPE (167 aa). The tract at residues 15–22 is G1; it reads GRPNVGKS. Position 15 to 22 (15 to 22) interacts with GTP; it reads GRPNVGKS. Residues 41 to 45 are G2; it reads QTTRN. A G3 region spans residues 62 to 65; the sequence is DTPG. GTP is bound by residues 62–66 and 122–125; these read DTPGI and NKID. The G4 stretch occupies residues 122–125; sequence NKID. Residues 152 to 154 form a G5 region; that stretch reads ISA. The region spanning 204–281 is the KH type-2 domain; that stretch reads TNREVPYGTA…YLELFVQVQE (78 aa).

Belongs to the TRAFAC class TrmE-Era-EngA-EngB-Septin-like GTPase superfamily. Era GTPase family. In terms of assembly, monomer.

It is found in the cytoplasm. The protein resides in the cell inner membrane. In terms of biological role, an essential GTPase that binds both GDP and GTP, with rapid nucleotide exchange. Plays a role in 16S rRNA processing and 30S ribosomal subunit biogenesis and possibly also in cell cycle regulation and energy metabolism. The protein is GTPase Era of Trichlorobacter lovleyi (strain ATCC BAA-1151 / DSM 17278 / SZ) (Geobacter lovleyi).